Here is a 246-residue protein sequence, read N- to C-terminus: Pyridoxine 5'-phosphate synthase (246 aa).

2 residues coordinate 3-amino-2-oxopropyl phosphate: N8 and R19. H44 serves as the catalytic Proton acceptor. 2 residues coordinate 1-deoxy-D-xylulose 5-phosphate: R46 and H51. E76 acts as the Proton acceptor in catalysis. T106 is a binding site for 1-deoxy-D-xylulose 5-phosphate. H198 serves as the catalytic Proton donor. 3-amino-2-oxopropyl phosphate is bound by residues D199 and 221-222 (GH).

The protein belongs to the PNP synthase family. Homooctamer; tetramer of dimers.

Its subcellular location is the cytoplasm. It carries out the reaction 3-amino-2-oxopropyl phosphate + 1-deoxy-D-xylulose 5-phosphate = pyridoxine 5'-phosphate + phosphate + 2 H2O + H(+). It functions in the pathway cofactor biosynthesis; pyridoxine 5'-phosphate biosynthesis; pyridoxine 5'-phosphate from D-erythrose 4-phosphate: step 5/5. Functionally, catalyzes the complicated ring closure reaction between the two acyclic compounds 1-deoxy-D-xylulose-5-phosphate (DXP) and 3-amino-2-oxopropyl phosphate (1-amino-acetone-3-phosphate or AAP) to form pyridoxine 5'-phosphate (PNP) and inorganic phosphate. The chain is Pyridoxine 5'-phosphate synthase from Brucella suis (strain ATCC 23445 / NCTC 10510).